A 304-amino-acid chain; its full sequence is Cell division protein ZipA (304 aa).

Residues 1–5 (MQDLR) lie on the Periplasmic side of the membrane. Residues 6-26 (LILIVVGAIAIIALLLHGLWT) form a helical membrane-spanning segment. Residues 27–304 (SRKERSSVFR…IRDVIDANSH (278 aa)) lie on the Cytoplasmic side of the membrane. Positions 31–165 (RSSVFRDRPH…PEPQSQPKQK (135 aa)) are disordered. The segment covering 121 to 132 (ARPETHKPDQPE) has biased composition (basic and acidic residues). Positions 137 to 158 (AAPAAAETAPAPAEPAQKTPEP) are enriched in low complexity.

Belongs to the ZipA family. In terms of assembly, interacts with FtsZ via their C-terminal domains.

Its subcellular location is the cell inner membrane. Its function is as follows. Essential cell division protein that stabilizes the FtsZ protofilaments by cross-linking them and that serves as a cytoplasmic membrane anchor for the Z ring. Also required for the recruitment to the septal ring of downstream cell division proteins. The polypeptide is Cell division protein ZipA (Erwinia tasmaniensis (strain DSM 17950 / CFBP 7177 / CIP 109463 / NCPPB 4357 / Et1/99)).